The following is a 503-amino-acid chain: Probable cytosol aminopeptidase (503 aa).

K274 and D279 together coordinate Mn(2+). Residue K286 is part of the active site. Mn(2+)-binding residues include D297, D356, and E358. R360 is an active-site residue.

The protein belongs to the peptidase M17 family. Mn(2+) serves as cofactor.

Its subcellular location is the cytoplasm. The catalysed reaction is Release of an N-terminal amino acid, Xaa-|-Yaa-, in which Xaa is preferably Leu, but may be other amino acids including Pro although not Arg or Lys, and Yaa may be Pro. Amino acid amides and methyl esters are also readily hydrolyzed, but rates on arylamides are exceedingly low.. The enzyme catalyses Release of an N-terminal amino acid, preferentially leucine, but not glutamic or aspartic acids.. Its function is as follows. Presumably involved in the processing and regular turnover of intracellular proteins. Catalyzes the removal of unsubstituted N-terminal amino acids from various peptides. This is Probable cytosol aminopeptidase from Burkholderia pseudomallei (strain 1106a).